The primary structure comprises 997 residues: Kinesin-like protein KIF19 (997 aa).

The Kinesin motor domain maps to 11-346 (QLMVALRVRP…LTYAGRAKNI (336 aa)). An ATP-binding site is contributed by 104–111 (GPTGCGKT). Positions 361 to 388 (IAQYTSIIADLRGEIQRLKCKIDQQAGR) form a coiled coil. Residues 477 to 494 (EERRKESYTKEDSEKDSD) are compositionally biased toward basic and acidic residues. Disordered regions lie at residues 477–509 (EERRKESYTKEDSEKDSDTGDEPDNLEPPEVAS), 665–704 (KITPAGATLTPDSDLESVKTLSSEAQRPQNNTLPPLGTDS), 718–759 (QVKS…SSEN), and 784–997 (AAQR…LQHN). A coiled-coil region spans residues 506 to 551 (EVASARENIAALVGEQKKLRKEKLALEQRCRELRARGRRLEETLPR). The span at 683 to 697 (KTLSSEAQRPQNNTL) shows a compositional bias: polar residues. Residues 750–759 (INSSPESSEN) are compositionally biased toward low complexity. Polar residues-rich tracts occupy residues 835-851 (TLQHAISEDNLSSSTGE) and 950-959 (PNQNTGSGNP).

This sequence belongs to the TRAFAC class myosin-kinesin ATPase superfamily. Kinesin family. Strongly expressed in the oviduct and trachea. Expressed in testis, lung, ovary and brain.

Its subcellular location is the cytoplasm. It is found in the cytoskeleton. It localises to the cell projection. The protein localises to the cilium. Functionally, plus end-directed microtubule-dependent motor protein that regulates the length of motile cilia by mediating depolymerization of microtubules at ciliary tips. The sequence is that of Kinesin-like protein KIF19 (Kif19) from Mus musculus (Mouse).